We begin with the raw amino-acid sequence, 1441 residues long: Probable cleavage and polyadenylation specificity factor subunit 1 (1441 aa).

This sequence belongs to the CPSF1 family. As to quaternary structure, CPSF is a heterotetramer composed of four distinct subunits 160, 100, 70 and 30 kDa.

The protein localises to the nucleus. Functionally, CPSF plays a key role in pre-mRNA 3'-end formation, recognizing the AAUAAA signal sequence and interacting with poly(A)polymerase and other factors to bring about cleavage and poly(A) addition. This subunit is involved in the RNA recognition step of the polyadenylation reaction. The chain is Probable cleavage and polyadenylation specificity factor subunit 1 from Oryza sativa subsp. japonica (Rice).